Consider the following 139-residue polypeptide: Ribulose bisphosphate carboxylase small subunit (139 aa).

This sequence belongs to the RuBisCO small chain family. As to quaternary structure, heterohexadecamer of 8 large and 8 small subunits.

The protein localises to the plastid. It is found in the chloroplast. Its function is as follows. RuBisCO catalyzes two reactions: the carboxylation of D-ribulose 1,5-bisphosphate, the primary event in carbon dioxide fixation, as well as the oxidative fragmentation of the pentose substrate in the photorespiration process. Both reactions occur simultaneously and in competition at the same active site. Although the small subunit is not catalytic it is essential for maximal activity. This Cylindrotheca sp. (strain N1) (Marine diatom) protein is Ribulose bisphosphate carboxylase small subunit.